Consider the following 516-residue polypeptide: Flavin-dependent halogenase armH2 (516 aa).

FAD is bound by residues Gly16, Ala19, and Glu49. Residues Ser328 and Gly329 each contribute to the chloride site. Ile330 lines the FAD pocket. The interval 440 to 475 is disordered; that stretch reads PQANGNGAAKQDAVPAPIPVALSSGAGPEKDAKRRE.

It belongs to the flavin-dependent halogenase family.

It catalyses the reaction melleolide F + FADH2 + chloride + O2 = 6'-chloromelleolide F + FAD + 2 H2O + H(+). In terms of biological role, flavin-dependent halogenase involved in the biosynthesis of melleolides, a range of antifungal and phytotoxic polyketide derivatives composed of an orsellinic acid (OA) moiety esterified to various sesquiterpene alcohols. The halogenase catalyzes the transfer of a single chlorine atom to the melleolide backbone, resulting in a 6'-chloromelleolide product. The enzyme acts on free substrate and does not depend on carrier-protein-dependent acceptor molecules. In Armillaria mellea (Honey mushroom), this protein is Flavin-dependent halogenase armH2.